Reading from the N-terminus, the 1001-residue chain is Translation initiation factor IF-2 (1001 aa).

The interval 56-418 is disordered; sequence PDYVHDPNAV…VEAGPPPISR (363 aa). The span at 70–84 shows a compositional bias: basic and acidic residues; the sequence is TEAHEERHEHEEAHE. A compositionally biased stretch (low complexity) spans 85 to 108; that stretch reads PAAAPKAAVEPETPVAPAPEAAPA. Residues 109–120 show a composition bias toward basic and acidic residues; the sequence is AKEERPAPEEPA. Composition is skewed to pro residues over residues 136–170, 180–194, 204–217, 229–252, 305–322, and 345–357; these read IHPPVGATPPPRPEGPRAAPAPPLPPPAPQVPHAP, PARPEPPAHHPPSQT, RPAPPSAKPLPTTT, QPFPSSPAPGAPQRPQAIPRPPQQ, PAAPRPGVPKAPSAPVPG, and GMPPSRPGGPRPQ. Residues 379-410 are compositionally biased toward basic and acidic residues; that stretch reads SRGRPGDRRPVRQQRERTEEEKILRPQRRHVE. The region spanning 499–668 is the tr-type G domain; that stretch reads RRAPVVTIMG…LLVADMQDLK (170 aa). The segment at 508–515 is G1; sequence GHVDHGKT. 508–515 lines the GTP pocket; it reads GHVDHGKT. Residues 533–537 form a G2 region; that stretch reads GITQH. A G3 region spans residues 554–557; that stretch reads DTPG. Residues 554–558 and 608–611 contribute to the GTP site; these read DTPGH and NKID. Residues 608–611 are G4; the sequence is NKID. The G5 stretch occupies residues 644–646; it reads SAR.

The protein belongs to the TRAFAC class translation factor GTPase superfamily. Classic translation factor GTPase family. IF-2 subfamily.

Its subcellular location is the cytoplasm. In terms of biological role, one of the essential components for the initiation of protein synthesis. Protects formylmethionyl-tRNA from spontaneous hydrolysis and promotes its binding to the 30S ribosomal subunits. Also involved in the hydrolysis of GTP during the formation of the 70S ribosomal complex. The protein is Translation initiation factor IF-2 of Solibacter usitatus (strain Ellin6076).